The sequence spans 177 residues: HVA22-like protein a (177 aa).

Transmembrane regions (helical) follow at residues 18–38 (VLAG…QAIE), 47–67 (QWLT…TFAK), and 68–88 (LIEW…WLVI).

Belongs to the DP1 family. As to expression, predominantly expressed in flower buds and stem.

Its subcellular location is the membrane. The sequence is that of HVA22-like protein a (HVA22A) from Arabidopsis thaliana (Mouse-ear cress).